Here is a 521-residue protein sequence, read N- to C-terminus: Caspase-10 (521 aa).

A propeptide spanning residues 1-219 is cleaved from the precursor; the sequence is MKSQGQHWYS…GEEELVSQTD (219 aa). DED domains are found at residues 19–97 and 114–187; these read SFRE…HLNC and LFRN…NIEK. 2 stretches are compositionally biased toward polar residues: residues 231–248 and 259–268; these read SWQNKHAGSNGNRATNGA and ASANTLNSET. The segment at 231-269 is disordered; that stretch reads SWQNKHAGSNGNRATNGAPSLVSRGMQGASANTLNSETS. Catalysis depends on residues histidine 358 and cysteine 401.

The protein belongs to the peptidase C14A family. In terms of assembly, heterotetramer that consists of two anti-parallel arranged heterodimers, each one formed by a 23/17 kDa (p23/17) (depending on the splicing events) and a 12 kDa (p12) subunit. Self-associates. Interacts with FADD and CASP8. Found in a Fas signaling complex consisting of FAS, FADD, CASP8 and CASP10. Interacts with RFFL and RNF34; negatively regulate CASP10 through proteasomal degradation. Interacts with RIOK3. In terms of processing, cleavage by granzyme B and autocatalytic activity generate the two active subunits. In terms of tissue distribution, detectable in most tissues. Lowest expression is seen in brain, kidney, prostate, testis and colon.

The enzyme catalyses Strict requirement for Asp at position P1 and has a preferred cleavage sequence of Leu-Gln-Thr-Asp-|-Gly.. In terms of biological role, involved in the activation cascade of caspases responsible for apoptosis execution. Recruited to both Fas- and TNFR-1 receptors in a FADD dependent manner. May participate in the granzyme B apoptotic pathways. Cleaves and activates effector caspases CASP3, CASP4, CASP6, CASP7, CASP8 and CASP9. Hydrolyzes the small- molecule substrates, Tyr-Val-Ala-Asp-|-AMC and Asp-Glu-Val-Asp-|-AMC. Its function is as follows. Isoform 7 can enhance NF-kappaB activity but promotes only slight apoptosis. Isoform C is proteolytically inactive. In Homo sapiens (Human), this protein is Caspase-10 (CASP10).